The chain runs to 1005 residues: Retinoblastoma-related protein (1005 aa).

A domain A region spans residues 404–605; the sequence is TPVSTAMTTA…EKGSSMYNSL (202 aa). The segment at 404–853 is pocket; that stretch reads TPVSTAMTTA…NEIFIPSVKP (450 aa). The interval 606-722 is spacer; the sequence is TIARPNLSNE…HPTRGETCAE (117 aa). A domain B region spans residues 723-853; it reads TAVNLFFSKI…NEIFIPSVKP (131 aa). Polar residues predominate over residues 863 to 873; that stretch reads VPKNPNNQVSE. The disordered stretch occupies residues 863-899; that stretch reads VPKNPNNQVSETNKKDESGPCPCPGSPKVSSFPSLPD.

Belongs to the retinoblastoma protein (RB) family.

It localises to the nucleus. In terms of biological role, regulator of biological processes that recruits a histone deacetylase to control gene transcription. May play a role in the entry into mitosis, negatively regulating the cell proliferation. Formation of stable complexes with geminiviridae replication-associated proteins may create a cellular environment which favors viral DNA replication. In Pilosella piloselloides (Glaucous king-devil hawkweed), this protein is Retinoblastoma-related protein (RBR).